The following is a 617-amino-acid chain: 1-deoxy-D-xylulose-5-phosphate synthase (617 aa).

Residues H76 and G117–S119 contribute to the thiamine diphosphate site. D148 serves as a coordination point for Mg(2+). Residues G149–A150, N177, Y285, and E366 contribute to the thiamine diphosphate site. N177 contacts Mg(2+).

The protein belongs to the transketolase family. DXPS subfamily. In terms of assembly, homodimer. Mg(2+) is required as a cofactor. Thiamine diphosphate serves as cofactor.

It carries out the reaction D-glyceraldehyde 3-phosphate + pyruvate + H(+) = 1-deoxy-D-xylulose 5-phosphate + CO2. The protein operates within metabolic intermediate biosynthesis; 1-deoxy-D-xylulose 5-phosphate biosynthesis; 1-deoxy-D-xylulose 5-phosphate from D-glyceraldehyde 3-phosphate and pyruvate: step 1/1. Functionally, catalyzes the acyloin condensation reaction between C atoms 2 and 3 of pyruvate and glyceraldehyde 3-phosphate to yield 1-deoxy-D-xylulose-5-phosphate (DXP). In Histophilus somni (strain 2336) (Haemophilus somnus), this protein is 1-deoxy-D-xylulose-5-phosphate synthase.